A 93-amino-acid chain; its full sequence is U12-lycotoxin-Ls1e (93 aa).

A signal peptide spans 1-18 (MKFAVILLFTLVVLAVAS). A propeptide spanning residues 19 to 38 (ESVEEDTREIDVEEFQEQQR) is cleaved from the precursor.

It belongs to the neurotoxin 31 family. In terms of processing, contains 5 disulfide bonds. Expressed by the venom gland.

Its subcellular location is the secreted. The chain is U12-lycotoxin-Ls1e from Lycosa singoriensis (Wolf spider).